We begin with the raw amino-acid sequence, 152 residues long: Nuclear cap-binding protein subunit 2 (152 aa).

MRNA is bound by residues Tyr-8, Tyr-31, 100 to 104 (RTDWD), 111 to 115 (RQFGR), and 121 to 122 (QV). The RRM domain maps to 28–106 (TTLYVGNMSF…RIIRTDWDAG (79 aa)).

It belongs to the RRM NCBP2 family. Component of the nuclear cap-binding complex (CBC), a heterodimer composed of Cbp80 and Cbp20 that interacts with m7GpppG-capped RNA.

The protein localises to the nucleus. Functionally, component of the cap-binding complex (CBC), which binds co-transcriptionally to the 5' cap of pre-mRNAs and is involved in various processes such as pre-mRNA splicing and RNA-mediated gene silencing (RNAi). The CBC complex is involved in miRNA-mediated RNA interference and is required for primary microRNAs (miRNAs) processing. Also involved in innate immunity via the short interfering RNAs (siRNAs) processing machinery by restricting the viral RNA production. In the CBC complex, Cbp20 recognizes and binds capped RNAs (m7GpppG-capped RNA) but requires Cbp80 to stabilize the movement of its N-terminal loop and lock the CBC into a high affinity cap-binding state with the cap structure. The polypeptide is Nuclear cap-binding protein subunit 2 (Cbp20) (Ixodes scapularis (Black-legged tick)).